The sequence spans 199 residues: N-(5'-phosphoribosyl)anthranilate isomerase (199 aa).

The protein belongs to the TrpF family.

The catalysed reaction is N-(5-phospho-beta-D-ribosyl)anthranilate = 1-(2-carboxyphenylamino)-1-deoxy-D-ribulose 5-phosphate. It participates in amino-acid biosynthesis; L-tryptophan biosynthesis; L-tryptophan from chorismate: step 3/5. The sequence is that of N-(5'-phosphoribosyl)anthranilate isomerase from Lacticaseibacillus casei (strain BL23) (Lactobacillus casei).